The primary structure comprises 1073 residues: Self-sufficient cytochrome P450 monooxygenase CYP505AG1 (1073 aa).

Position 409 (C409) interacts with heme. A Flavodoxin-like domain is found at 501–644; the sequence is VTILYGSNSG…DLENWEDEHL (144 aa). FMN is bound by residues 507-511 and 588-620; these read SNSGT and VFACGHHDWAKTFYKVPIMIDELLARAGAHRVA. The FAD-binding FR-type domain maps to 680–909; it reads HNAVECIVSE…RPCKKQFHLP (230 aa).

The protein in the N-terminal section; belongs to the cytochrome P450 family. FAD serves as cofactor. Requires FMN as cofactor. Heme is required as a cofactor.

It catalyses the reaction 2 oxidized [cytochrome P450] + NADPH = 2 reduced [cytochrome P450] + NADP(+) + H(+). The enzyme catalyses an organic molecule + reduced [NADPH--hemoprotein reductase] + O2 = an alcohol + oxidized [NADPH--hemoprotein reductase] + H2O + H(+). It carries out the reaction dodecanoate + reduced [NADPH--hemoprotein reductase] + O2 = 10-hydroxydodecanoate + oxidized [NADPH--hemoprotein reductase] + H2O + H(+). The catalysed reaction is tetradecanoate + reduced [NADPH--hemoprotein reductase] + O2 = 12-hydroxytetradecanoate + oxidized [NADPH--hemoprotein reductase] + H2O + H(+). Self-sufficient cytochrome P450 monooxygenase that catalyzes the regioselective in-chain hydroxylation of alkanes, fatty alcohols, and fatty acids, giving sub-terminal hydroxylation by acting preferentially on the omega-2 position. Prefers fatty acids as substrates, since it hydroxylates the small amounts of dodecanoic acid formed in the presence of an excess of 1-dodecanol. This chain is Self-sufficient cytochrome P450 monooxygenase CYP505AG1, found in Oidiodendron maius (strain Zn).